We begin with the raw amino-acid sequence, 106 residues long: Large ribosomal subunit protein P1A (106 aa).

The tract at residues 74-106 (AGGGAAAEEAAEEEKEEEAKEESDDDMGFGLFD) is disordered. A compositionally biased stretch (acidic residues) spans 82–100 (EAAEEEKEEEAKEESDDDM).

Belongs to the eukaryotic ribosomal protein P1/P2 family. As to quaternary structure, component of the large ribosomal subunit (LSU). Mature ribosomes consist of a small (40S) and a large (60S) subunit. The 40S subunit contains about 32 different proteins and 1 molecule of RNA (18S). The 60S subunit contains 45 different proteins and 3 molecules of RNA (25S, 5.8S and 5S). The 5 acidic ribosomal P-proteins form the stalk structure of the 60S subunit. They are organized as a pentameric complex in which uL10/P0 interacts with 2 heterodimers, P1A-P2B and P1B-P2A. In terms of processing, phosphorylated.

The protein resides in the cytoplasm. Component of the ribosome, a large ribonucleoprotein complex responsible for the synthesis of proteins in the cell. The small ribosomal subunit (SSU) binds messenger RNAs (mRNAs) and translates the encoded message by selecting cognate aminoacyl-transfer RNA (tRNA) molecules. The large subunit (LSU) contains the ribosomal catalytic site termed the peptidyl transferase center (PTC), which catalyzes the formation of peptide bonds, thereby polymerizing the amino acids delivered by tRNAs into a polypeptide chain. The nascent polypeptides leave the ribosome through a tunnel in the LSU and interact with protein factors that function in enzymatic processing, targeting, and the membrane insertion of nascent chains at the exit of the ribosomal tunnel. The sequence is that of Large ribosomal subunit protein P1A (RPP1A) from Candida albicans (strain SC5314 / ATCC MYA-2876) (Yeast).